A 142-amino-acid chain; its full sequence is Fluoride-specific ion channel FluC 1 (142 aa).

4 helical membrane passes run 23–43 (VNIA…YLID), 54–74 (LPLG…GLIG), 79–99 (GWLL…FSTF), and 116–136 (LGNV…AVSL). Na(+) is bound by residues G91 and T94.

The protein belongs to the fluoride channel Fluc/FEX (TC 1.A.43) family.

The protein resides in the cell membrane. The catalysed reaction is fluoride(in) = fluoride(out). With respect to regulation, na(+) is not transported, but it plays an essential structural role and its presence is essential for fluoride channel function. In terms of biological role, fluoride-specific ion channel. Important for reducing fluoride concentration in the cell, thus reducing its toxicity. The protein is Fluoride-specific ion channel FluC 1 of Nocardia farcinica (strain IFM 10152).